Consider the following 344-residue polypeptide: Outer membrane protein A (344 aa).

Topologically, residues 1 to 14 are periplasmic; the sequence is MKAIFVLNAAPKDN. A beta stranded membrane pass occupies residues 15 to 24; it reads TWYAGGKLGW. Over 25-49 the chain is Extracellular; the sequence is SQYHDTGFYGNGFQNNNGPTRNDQL. A beta stranded membrane pass occupies residues 50-59; that stretch reads GAGAFGGYQV. The Periplasmic portion of the chain corresponds to 60–62; the sequence is NPY. The beta stranded transmembrane segment at 63 to 71 threads the bilayer; it reads LGFEMGYDW. At 72 to 89 the chain is on the extracellular side; the sequence is LGRMAYKGSVDNGAFKAQ. The chain crosses the membrane as a beta stranded span at residues 90–100; the sequence is GVQLTAKLGYP. Topologically, residues 101–104 are periplasmic; the sequence is ITDD. Residues 105–114 form a beta stranded membrane-spanning segment; the sequence is LDIYTRLGGM. Residues 115-139 are Extracellular-facing; sequence VWRADSKGNYASTGVSRSEHDTGVS. Residues 140–149 traverse the membrane as a beta stranded segment; the sequence is PVFAGGVEWA. The Periplasmic segment spans residues 150–153; it reads VTRD. The beta stranded transmembrane segment at 154-162 threads the bilayer; that stretch reads IATRLEYQW. Topologically, residues 163-179 are extracellular; that stretch reads VNNIGDAGTVGTRPDNG. The beta stranded transmembrane segment at 180-188 threads the bilayer; the sequence is MLSLGVSYR. The Periplasmic portion of the chain corresponds to 189–344; the sequence is FGQEDAAPVV…YKEVVTQPQA (156 aa). 4 tandem repeats follow at residues 199–200, 201–202, 203–204, and 205–206. The interval 199–206 is 4 X 2 AA tandem repeats of A-P; that stretch reads APAPAPAP. The 129-residue stretch at 208–336 folds into the OmpA-like domain; that stretch reads VATKHFTLKS…RVEIEVKGYK (129 aa). C309 and C321 are disulfide-bonded.

Belongs to the outer membrane OOP (TC 1.B.6) superfamily. OmpA family. In terms of assembly, monomer and homodimer.

The protein localises to the cell outer membrane. With TolR probably plays a role in maintaining the position of the peptidoglycan cell wall in the periplasm. Acts as a porin with low permeability that allows slow penetration of small solutes; an internal gate slows down solute passage. In terms of biological role, required for conjugation with F-type plasmids; probably serves as the mating receptor on recipient cells. This Klebsiella pneumoniae protein is Outer membrane protein A.